The sequence spans 211 residues: Large ribosomal subunit protein uL4 (211 aa).

Positions 42–87 are disordered; sequence AHMRQGTASTLTRSEVRGGGRKPYKQKGTGRARQGSVRTPLRPGGG. Residues 60–71 are compositionally biased toward basic residues; it reads GGRKPYKQKGTG.

Belongs to the universal ribosomal protein uL4 family. As to quaternary structure, part of the 50S ribosomal subunit.

Functionally, one of the primary rRNA binding proteins, this protein initially binds near the 5'-end of the 23S rRNA. It is important during the early stages of 50S assembly. It makes multiple contacts with different domains of the 23S rRNA in the assembled 50S subunit and ribosome. Its function is as follows. Forms part of the polypeptide exit tunnel. The sequence is that of Large ribosomal subunit protein uL4 from Synechococcus sp. (strain CC9902).